A 144-amino-acid polypeptide reads, in one-letter code: Oxoglutarate dehydrogenase inhibitor (144 aa).

Phosphothreonine is present on Thr-14. The region spanning 68 to 117 is the FHA domain; it reads TAAGRHPDSDIFLDDVTVSRRHAEFRRNGDQYEVVDVGSLNGTYVNREPK.

Its subcellular location is the cytoplasm. Functionally, an essential component of the PknG signaling pathway. When unphosphorylated, it inhibits the activity of 2-oxoglutarate dehydrogenase. When phosphorylated it does not inhibit 2-oxoglutarate dehydrogenase. The sequence is that of Oxoglutarate dehydrogenase inhibitor (odhI) from Corynebacterium jeikeium (strain K411).